The primary structure comprises 441 residues: Glutamate--tRNA ligase 1 (441 aa).

Residues 8-18 (PSPTGHIHVGN) carry the 'HIGH' region motif. Positions 239 to 243 (ELSKR) match the 'KMSKS' region motif. ATP is bound at residue Lys242.

It belongs to the class-I aminoacyl-tRNA synthetase family. Glutamate--tRNA ligase type 1 subfamily. Monomer.

It localises to the cytoplasm. The catalysed reaction is tRNA(Glu) + L-glutamate + ATP = L-glutamyl-tRNA(Glu) + AMP + diphosphate. Catalyzes the attachment of glutamate to tRNA(Glu) in a two-step reaction: glutamate is first activated by ATP to form Glu-AMP and then transferred to the acceptor end of tRNA(Glu). This chain is Glutamate--tRNA ligase 1, found in Paracoccus denitrificans (strain Pd 1222).